Consider the following 2212-residue polypeptide: Nonribosomal peptide synthetase ftmPS (2212 aa).

Positions 74–473 (TYAELDSLSD…IEHHLQQTLP (400 aa)) are adenylation 1. The 78-residue stretch at 592-669 (PPSTLKETTI…EQSQRAGLIQ (78 aa)) folds into the Carrier 1 domain. Serine 629 is subject to O-(pantetheine 4'-phosphoryl)serine. The segment at 708–973 (EDIYPCTALQ…IATVPLRIRV (266 aa)) is condensation 1. Residues 1167–1564 (TYRELWAHSS…LSAVEASLMR (398 aa)) are adenylation 2. The 80-residue stretch at 1678–1757 (PMSDDNERRL…QFRHLITEDD (80 aa)) folds into the Carrier 2 domain. Serine 1715 carries the post-translational modification O-(pantetheine 4'-phosphoryl)serine. Residues 1815–2070 (HFQFDLSGAI…CTNYIPYRLS (256 aa)) are condensation 2.

It belongs to the NRP synthetase family.

The enzyme catalyses L-proline + L-tryptophan + 2 ATP = brevianamide F + 2 AMP + 2 diphosphate + 2 H(+). It functions in the pathway mycotoxin biosynthesis. In terms of biological role, nonribosomal peptide synthetase; part of the gene cluster that mediates the biosynthesis of fumitremorgins, indole alkaloids that carry not only intriguing chemical structures, but also interesting biological and pharmacological activities. The biosynthesis of fumitremorgin-type alkaloids begins by condensation of the two amino acids L-tryptophan and L-proline to brevianamide F, catalyzed by the non-ribosomal peptide synthetase ftmPS/ftmA. Brevianamide F is then prenylated by the prenyltransferase ftmPT1/ftmB in the presence of dimethylallyl diphosphate, resulting in the formation of tryprostatin B. The three cytochrome P450 monooxygenases, ftmP450-1/ftmC, ftmP450-2/ftmE and ftmP450-3/FtmG, are responsible for the conversion of tryprostatin B to 6-hydroxytryprostatin B, tryprostatin A to fumitremorgin C and fumitremorgin C to 12,13-dihydroxyfumitremorgin C, respectively. The putative methyltransferase ftmMT/ftmD is expected for the conversion of 6-hydroxytryprostatin B to tryprostatin A. FtmPT2/FtmH catalyzes the prenylation of 12,13-dihydroxyfumitre-morgin C in the presence of dimethylallyl diphosphate, resulting in the formation of fumitremorgin B. Fumitremorgin B is further converted to verruculogen by ftmOx1/ftmF via the insertion of an endoperoxide bond between the two prenyl moieties. Finally, verruculogen is further converted to fumitremorgin A by the verruculogen prenyltransferase ftmPT3. The protein is Nonribosomal peptide synthetase ftmPS (ftmPS) of Neosartorya fischeri (strain ATCC 1020 / DSM 3700 / CBS 544.65 / FGSC A1164 / JCM 1740 / NRRL 181 / WB 181) (Aspergillus fischerianus).